We begin with the raw amino-acid sequence, 657 residues long: 2',3'-cyclic-nucleotide 2'-phosphodiesterase/3'-nucleotidase (657 aa).

The N-terminal stretch at 1-26 (MMNRRHFIQISATSILALSANRFAMA) is a signal peptide. A divalent metal cation-binding residues include D41, H43, D86, N126, H235, H267, and H269. Substrate-binding positions include Y450 and 554–559 (YRAYGN).

It belongs to the 5'-nucleotidase family. A divalent metal cation serves as cofactor.

The protein localises to the periplasm. It carries out the reaction a nucleoside 2',3'-cyclic phosphate + H2O = a nucleoside 3'-phosphate + H(+). The catalysed reaction is a ribonucleoside 3'-phosphate + H2O = a ribonucleoside + phosphate. In terms of biological role, this bifunctional enzyme catalyzes two consecutive reactions during ribonucleic acid degradation. Converts a 2',3'-cyclic nucleotide to a 3'-nucleotide and then the 3'-nucleotide to the corresponding nucleoside and phosphate. The polypeptide is 2',3'-cyclic-nucleotide 2'-phosphodiesterase/3'-nucleotidase (cpdB) (Haemophilus influenzae (strain ATCC 51907 / DSM 11121 / KW20 / Rd)).